We begin with the raw amino-acid sequence, 332 residues long: 2,3-bisphosphoglycerate-dependent phosphoglycerate mutase 2 (332 aa).

Residues M1 to T48 constitute a chloroplast transit peptide. Substrate-binding positions include R85–N92, T98–G99, R135, E189–Y192, K200, R216–R217, and G260–N261. H86 functions as the Tele-phosphohistidine intermediate in the catalytic mechanism. E189 functions as the Proton donor/acceptor in the catalytic mechanism.

It belongs to the phosphoglycerate mutase family. BPG-dependent PGAM subfamily.

It localises to the plastid. The protein resides in the chloroplast. The enzyme catalyses (2R)-2-phosphoglycerate = (2R)-3-phosphoglycerate. It functions in the pathway carbohydrate degradation; glycolysis; pyruvate from D-glyceraldehyde 3-phosphate: step 3/5. Catalyzes the interconversion of 2-phosphoglycerate and 3-phosphoglycerate. This chain is 2,3-bisphosphoglycerate-dependent phosphoglycerate mutase 2, found in Arabidopsis thaliana (Mouse-ear cress).